Here is a 411-residue protein sequence, read N- to C-terminus: Protein-lysine 6-oxidase (411 aa).

An N-terminal signal peptide occupies residues Met-1–Cys-21. A propeptide spans Ala-22–Gly-162 (removed by BMP1). The disordered stretch occupies residues Pro-60 to Pro-168. N-linked (GlcNAc...) asparagine glycans are attached at residues Asn-91 and Asn-138. Tyr-181 is subject to Sulfotyrosine. Residues Pro-207–Tyr-411 are lysyl-oxidase like. Disulfide bonds link Cys-232–Cys-238, Cys-285–Cys-334, Cys-318–Cys-324, Cys-345–Cys-355, and Cys-392–Cys-406. The Cu cation site is built by His-286, His-288, and His-290. The segment at residues Lys-314–Tyr-349 is a cross-link (lysine tyrosylquinone (Lys-Tyr)). Tyr-349 is subject to 2',4',5'-topaquinone.

This sequence belongs to the lysyl oxidase family. In terms of assembly, interacts with MFAP4. Interacts (via propeptide) with EFEMP2; this interaction is strong and facilitates formation of ternary complexes with ELN during elastic fiber assembly; this interaction limits interaction of EFEMP2 with FBLN5. The cofactor is Cu cation. Lysine tyrosylquinone residue is required as a cofactor. Post-translationally, the lysine tyrosylquinone cross-link (LTQ) is generated by condensation of the epsilon-amino group of a lysine with a topaquinone produced by oxidation of tyrosine. Proteolytically cleaved by BMP1 which removes the propeptide. Also proteolytically cleaved by ADAMTS2 and ADAMTS14, but not by ADAMTS3, at an additional cleavage site downstream of the BMP1 cleavage site. The propeptide plays a role in directing the deposition of this enzyme to elastic fibers, via interaction with tropoelastin. Cleavage by BMP1 to remove the propeptide does not increase enzymatic activity but increases binding to collagen. Cleavage by ADAMTS2 produces a form with reduced collagen-binding activity. In terms of processing, sulfated at Tyr-181 and also at either Tyr-177 or Tyr-178 which enhances binding to collagen. As to expression, aorta and lung.

It is found in the secreted. Its subcellular location is the extracellular space. The enzyme catalyses L-lysyl-[protein] + O2 + H2O = (S)-2-amino-6-oxohexanoyl-[protein] + H2O2 + NH4(+). In terms of biological role, responsible for the post-translational oxidative deamination of peptidyl lysine residues in precursors to fibrous collagen and elastin. Regulator of Ras expression. May play a role in tumor suppression. Plays a role in the aortic wall architecture. In Rattus norvegicus (Rat), this protein is Protein-lysine 6-oxidase.